The following is a 221-amino-acid chain: uncharacterized protein (221 aa).

The first 18 residues, 1-18, serve as a signal peptide directing secretion; sequence MKRFLLLIILFGISFSFV.

This is an uncharacterized protein from Aquifex aeolicus (strain VF5).